Consider the following 840-residue polypeptide: MKFCLYCCHCYIVICGKATHYYKSSKATSNLKSSNRVLMRNPMSPSEQHSQHNSTLAASPFVSNVSAARTQQSLPTDAQNDRLQQPWNRTNTATSPYQSLANSPLIQKLQANIMTPHQPSANSNSNSNSITGNVVNDNNLLASMSKNSMFGSTIPSTLRKVSLQREYKDSVDGVVRDEDNDEDVHNNGDAAANANNDRESKLGHNGPLTTTTLTTTTTATQLDVSELSAIERLRLWRFDALMQHMYRTAEYIADKVYNISNDPDDAFWLGQVYYNNNQYVRAVELITRNNLDGVNILCRYLLGLSFVKLQRFDDALDVIGEYNPFSEDPSTTAANTMSNNGNNSNTSQPVTDGGIKMESSLCFLRGKIYFAQNNFNKARDAFREAILVDIKNFEAFEMLLSKNLLTPQEEWDLFDSLDFKEFGEDKEIMKNLYKINLSKYINTEDITKSNEILAKDYKLADNVDVVRSKVDICYTQCKFNECLELCETVLENDEFNTNILPAYIGCLYELSNKNKLFLLSHRLAETFPKSAITWFSVATYYMSLDRISEAQKYYSKSSILDPSFAAAWLGFAHTYALEGEQDQALTAYSTASRFFPGMHLPKLFLGMQFMAMNSLNLAESYFVLAYDICPNDPLVLNEMGVMYFKKNEFVKAKKYLKKALEVVKDLDPSSRTTISIQLNLGHTYRKLNENEIAIKCFRCVLEKNDKNSEIHCSLGYLYLKTKKLQKAIDHLHKSLYLKPNNSSATALLKNALELNVTLSLDASHPLIDKSNLMSQASKDKASLNKKRSSLTYDPVNMAKRLRTQKEIFDQNNKALRKGGHDSKTGSNNADDDFDADMELE.

Disordered regions lie at residues 67–97 (AART…TSPY) and 173–212 (GVVR…TTTT). TPR repeat units follow at residues 229–260 (AIER…YNIS), 263–288 (PDDA…LITR), and 296–319 (ILCR…LDVI). Positions 329–350 (PSTTAANTMSNNGNNSNTSQPV) are disordered. Over residues 330-347 (STTAANTMSNNGNNSNTS) the composition is skewed to low complexity. TPR repeat units lie at residues 357 to 388 (MESS…AILV), 393 to 416 (FEAF…LFDS), 426 to 454 (KEIM…EILA), 464 to 492 (DVVR…VLEN), 499 to 526 (ILPA…LAET), 531 to 560 (AITW…SSIL), 565 to 593 (AAAW…TASR), 600 to 628 (LPKL…AYDI), 633 to 665 (PLVL…VVKD), 671 to 703 (RTTI…VLEK), and 708 to 737 (SEIH…SLYL). The segment at 802–840 (RTQKEIFDQNNKALRKGGHDSKTGSNNADDDFDADMELE) is disordered. Over residues 829-840 (ADDDFDADMELE) the composition is skewed to acidic residues.

Belongs to the APC6/CDC16 family. In terms of assembly, the APC/C is composed of at least 13 subunits that stay tightly associated throughout the cell cycle: APC1, APC2, APC4, APC5, APC9, APC11, CDC16, CDC23, CDC26, CDC27, DOC1, MND2 and SWM1. Interacts with AMA1. Post-translationally, phosphorylated by CDC28, which is required for the early mitotic activity of the APC/C in its CDC20-bound form.

Its subcellular location is the nucleus. It functions in the pathway protein modification; protein ubiquitination. Its function is as follows. Component of the anaphase promoting complex/cyclosome (APC/C), a cell cycle-regulated E3 ubiquitin-protein ligase complex that controls progression through mitosis and the G1 phase of the cell cycle. The APC/C is thought to confer substrate specificity and, in the presence of ubiquitin-conjugating E2 enzymes, it catalyzes the formation of protein-ubiquitin conjugates that are subsequently degraded by the 26S proteasome. In early mitosis, the APC/C is activated by CDC20 and targets securin PDS1, the B-type cyclin CLB5, and other anaphase inhibitory proteins for proteolysis, thereby triggering the separation of sister chromatids at the metaphase-to-anaphase transition. In late mitosis and in G1, degradation of CLB5 allows activation of the APC/C by CDH1, which is needed to destroy CDC20 and the B-type cyclin CLB2 to allow exit from mitosis and creating the low CDK state necessary for cytokinesis and for reforming prereplicative complexes in G1 prior to another round of replication. In Saccharomyces cerevisiae (strain ATCC 204508 / S288c) (Baker's yeast), this protein is Anaphase-promoting complex subunit CDC16 (CDC16).